Consider the following 495-residue polypeptide: Trigger factor (495 aa).

The PPIase FKBP-type domain occupies 169-254 (GDRVAMDYVG…VKDVAAPGAV (86 aa)). Residues 441 to 495 (LAEDEGEAKAETKKAAPKKKAAAKTEAAEAGEGEEAAAPKKKAAPKKKAADESAE) form a disordered region.

This sequence belongs to the FKBP-type PPIase family. Tig subfamily.

Its subcellular location is the cytoplasm. It carries out the reaction [protein]-peptidylproline (omega=180) = [protein]-peptidylproline (omega=0). Its function is as follows. Involved in protein export. Acts as a chaperone by maintaining the newly synthesized protein in an open conformation. Functions as a peptidyl-prolyl cis-trans isomerase. The chain is Trigger factor from Rhizobium etli (strain CIAT 652).